Reading from the N-terminus, the 418-residue chain is Tektin-1 (418 aa).

Coiled coils occupy residues 20-107, 134-177, 266-308, and 332-383; these read NKSQ…SYKE, QELQ…DLRD, NGLK…QQEG, and IAQY…ENTI.

Belongs to the tektin family. As to quaternary structure, microtubule inner protein component of sperm flagellar doublet microtubules. In terms of processing, ubiquitinated, leading to its degradation. Deubiquitinated by USP16, promoting its stability.

Its subcellular location is the cytoplasm. The protein localises to the cytoskeleton. It is found in the cilium axoneme. It localises to the flagellum axoneme. Microtubule inner protein (MIP) part of the dynein-decorated doublet microtubules (DMTs) in cilia and flagellar axoneme. Forms filamentous polymers in the walls of ciliary and flagellar microtubules. This is Tektin-1 (Tekt1) from Mus musculus (Mouse).